Reading from the N-terminus, the 633-residue chain is ATP-dependent zinc metalloprotease FtsH (633 aa).

The Cytoplasmic portion of the chain corresponds to 1-19 (MTPSNEPGKQDQIPQPGPT). Residues 20–40 (IPNQYSFLWLSAAIFLMFLWL) traverse the membrane as a helical segment. Topologically, residues 41 to 133 (QGNNQQQQQE…SRSGRPWWQE (93 aa)) are periplasmic. Residues 134–154 (LILGFLPWILLLALMFWFWGA) form a helical membrane-spanning segment. The Cytoplasmic portion of the chain corresponds to 155-633 (AQKRMTQGGG…LEEARSRETA (479 aa)). An ATP-binding site is contributed by 226–233 (GPPGTGKT). His-447 contacts Zn(2+). Glu-448 is a catalytic residue. The Zn(2+) site is built by His-451 and Asp-523.

The protein in the central section; belongs to the AAA ATPase family. In the C-terminal section; belongs to the peptidase M41 family. In terms of assembly, homohexamer. Requires Zn(2+) as cofactor.

It is found in the cell inner membrane. Its function is as follows. Acts as a processive, ATP-dependent zinc metallopeptidase for both cytoplasmic and membrane proteins. Plays a role in the quality control of integral membrane proteins. This chain is ATP-dependent zinc metalloprotease FtsH, found in Marinobacter nauticus (strain ATCC 700491 / DSM 11845 / VT8) (Marinobacter aquaeolei).